The sequence spans 166 residues: Large ribosomal subunit protein mL41 (166 aa).

Residues 1 to 26 constitute a mitochondrion transit peptide; that stretch reads MQNCIKLVPLALKCPQRAISTSAVLD.

Belongs to the mitochondrion-specific ribosomal protein mL41 family. In terms of assembly, component of the mitochondrial ribosome large subunit (39S) which comprises a 16S rRNA and about 50 distinct proteins.

It is found in the mitochondrion. This is Large ribosomal subunit protein mL41 (mRpL41) from Drosophila pseudoobscura pseudoobscura (Fruit fly).